A 362-amino-acid chain; its full sequence is PDZ and LIM domain protein 3 (362 aa).

Residues 1–84 (MPQNVVLPGP…QLCLKIDRAE (84 aa)) form the PDZ domain. Phosphoserine is present on residues Ser-18, Ser-92, and Ser-263. A disordered region spans residues 261 to 282 (DGSDDRPAGTRSVRPVTKVHGG). One can recognise an LIM zinc-binding domain in the interval 290 to 349 (PLCDKCGSGIVGAVVKARDKYRHPECFVCADCNLNLKQKGYFFVEGELYCEMHARARTRP).

In terms of assembly, interacts with ACTN2. Forms a heterodimer with PDLIM4 (via LIM domain). As to expression, highly expressed in skeletal muscle and at low levels in the heart.

The protein localises to the cytoplasm. The protein resides in the myofibril. It is found in the sarcomere. It localises to the z line. Its function is as follows. May play a role in the organization of actin filament arrays within muscle cells. This Rattus norvegicus (Rat) protein is PDZ and LIM domain protein 3 (Pdlim3).